A 313-amino-acid polypeptide reads, in one-letter code: Glutaminase (313 aa).

Residues S64, N116, E163, N170, Y194, Y246, and V264 each coordinate substrate.

It belongs to the glutaminase family. Homotetramer.

The enzyme catalyses L-glutamine + H2O = L-glutamate + NH4(+). This chain is Glutaminase, found in Exiguobacterium sp. (strain ATCC BAA-1283 / AT1b).